A 399-amino-acid polypeptide reads, in one-letter code: uncharacterized protein (399 aa).

Over 1–8 (MHNLQVRR) the chain is Cytoplasmic. Residues 9–35 (HYAALKGFYLFAFLGTGSIIPLLSMYL) traverse the membrane as a helical segment. The Extracellular portion of the chain corresponds to 36–42 (TKEQHLS). A helical transmembrane segment spans residues 43-71 (GSQVGLIMSLGPIVMIFFQPFWGMLSDYT). Over 72–75 (QKTK) the chain is Cytoplasmic. Residues 76-101 (GLLAVCTSITGIIGLAYIAFDSFPLF) traverse the membrane as a helical segment. Over 102–105 (ILIA) the chain is Extracellular. Residues 106-123 (ACFAAFQSTIIPLSDSIS) form a helical membrane-spanning segment. Residues 124 to 134 (LRYTQETNGNY) are Cytoplasmic-facing. A helical transmembrane segment spans residues 135–157 (GGIRLFGSLGFGVAVFAMGQVTN). Topologically, residues 158-160 (QLY) are extracellular. A helical membrane pass occupies residues 161–180 (PIHVIFIFGCAFLCIAAILA). Residues 181–210 (SQVPGQQKTTKVNIRKGFRELISNKTFLIF) lie on the Cytoplasmic side of the membrane. A helical membrane pass occupies residues 211-230 (MIITFTTFAPNLANNTYFSL). Residues 231–234 (FLDK) lie on the Extracellular side of the membrane. Residues 235 to 259 (SGASLSAIGILFFIGVISEIPFMRF) traverse the membrane as a helical segment. Topologically, residues 260–269 (AQTFIDKMGL) are cytoplasmic. A helical transmembrane segment spans residues 270–289 (LNVIMLSGGVSLFRWALYFT). The Extracellular segment spans residues 290 to 292 (APS). Residues 293–315 (LWIIYATVFLQGVAIGLFIPAAL) traverse the membrane as a helical segment. The Cytoplasmic segment spans residues 316-327 (QYVKKITPRHVE). Residues 328 to 355 (ATALTMYAAIGNGFGNWFCTFAGGYIFD) form a helical membrane-spanning segment. Over 356-358 (YVS) the chain is Extracellular. A helical membrane pass occupies residues 359 to 379 (IFAVYLLFGILSIAGFGLTLY). Over 380–399 (LMKAEKNKHTLHQPAVTFKP) the chain is Cytoplasmic.

Belongs to the major facilitator superfamily.

The protein localises to the cell membrane. This is an uncharacterized protein from Bacillus subtilis (strain 168).